Consider the following 274-residue polypeptide: Large ribosomal subunit protein uL2cz (274 aa).

Disordered regions lie at residues Met1–Asn25 and Asn224–Lys274. Residues Lys7–Asn25 show a composition bias toward polar residues.

Belongs to the universal ribosomal protein uL2 family. As to quaternary structure, part of the 50S ribosomal subunit.

The protein localises to the plastid. It localises to the chloroplast. The polypeptide is Large ribosomal subunit protein uL2cz (rpl2-A) (Atropa belladonna (Belladonna)).